The following is a 389-amino-acid chain: Glutamate 5-kinase (389 aa).

Residue K17 participates in ATP binding. Substrate is bound by residues S57, D144, and N156. ATP is bound at residue 176 to 177; the sequence is SD. A PUA domain is found at 282–359; the sequence is AGEIHVDAGA…NEIETILGYV (78 aa).

This sequence belongs to the glutamate 5-kinase family.

It localises to the cytoplasm. The enzyme catalyses L-glutamate + ATP = L-glutamyl 5-phosphate + ADP. The protein operates within amino-acid biosynthesis; L-proline biosynthesis; L-glutamate 5-semialdehyde from L-glutamate: step 1/2. In terms of biological role, catalyzes the transfer of a phosphate group to glutamate to form L-glutamate 5-phosphate. The protein is Glutamate 5-kinase of Agrobacterium fabrum (strain C58 / ATCC 33970) (Agrobacterium tumefaciens (strain C58)).